A 411-amino-acid polypeptide reads, in one-letter code: Multifunctional CCA protein (411 aa).

ATP contacts are provided by glycine 8 and arginine 11. 2 residues coordinate CTP: glycine 8 and arginine 11. Residues aspartate 21 and aspartate 23 each contribute to the Mg(2+) site. ATP contacts are provided by arginine 91, arginine 137, and arginine 140. CTP contacts are provided by arginine 91, arginine 137, and arginine 140. Positions 228 to 329 (CGIHTLMVAK…VNILDQIDSW (102 aa)) constitute an HD domain.

This sequence belongs to the tRNA nucleotidyltransferase/poly(A) polymerase family. Bacterial CCA-adding enzyme type 1 subfamily. Monomer. Can also form homodimers and oligomers. It depends on Mg(2+) as a cofactor. Ni(2+) is required as a cofactor.

It carries out the reaction a tRNA precursor + 2 CTP + ATP = a tRNA with a 3' CCA end + 3 diphosphate. It catalyses the reaction a tRNA with a 3' CCA end + 2 CTP + ATP = a tRNA with a 3' CCACCA end + 3 diphosphate. Functionally, catalyzes the addition and repair of the essential 3'-terminal CCA sequence in tRNAs without using a nucleic acid template. Adds these three nucleotides in the order of C, C, and A to the tRNA nucleotide-73, using CTP and ATP as substrates and producing inorganic pyrophosphate. tRNA 3'-terminal CCA addition is required both for tRNA processing and repair. Also involved in tRNA surveillance by mediating tandem CCA addition to generate a CCACCA at the 3' terminus of unstable tRNAs. While stable tRNAs receive only 3'-terminal CCA, unstable tRNAs are marked with CCACCA and rapidly degraded. The polypeptide is Multifunctional CCA protein (Photobacterium profundum (strain SS9)).